The chain runs to 137 residues: Large ribosomal subunit protein uL16 (137 aa).

It belongs to the universal ribosomal protein uL16 family. In terms of assembly, part of the 50S ribosomal subunit.

Binds 23S rRNA and is also seen to make contacts with the A and possibly P site tRNAs. This chain is Large ribosomal subunit protein uL16, found in Pseudomonas paraeruginosa (strain DSM 24068 / PA7) (Pseudomonas aeruginosa (strain PA7)).